A 215-amino-acid chain; its full sequence is FMN-dependent NADH:quinone oxidoreductase 1 (215 aa).

It belongs to the azoreductase type 1 family. As to quaternary structure, homodimer. It depends on FMN as a cofactor.

The enzyme catalyses 2 a quinone + NADH + H(+) = 2 a 1,4-benzosemiquinone + NAD(+). It catalyses the reaction N,N-dimethyl-1,4-phenylenediamine + anthranilate + 2 NAD(+) = 2-(4-dimethylaminophenyl)diazenylbenzoate + 2 NADH + 2 H(+). Functionally, quinone reductase that provides resistance to thiol-specific stress caused by electrophilic quinones. In terms of biological role, also exhibits azoreductase activity. Catalyzes the reductive cleavage of the azo bond in aromatic azo compounds to the corresponding amines. This is FMN-dependent NADH:quinone oxidoreductase 1 from Lactiplantibacillus plantarum (strain ATCC BAA-793 / NCIMB 8826 / WCFS1) (Lactobacillus plantarum).